The chain runs to 355 residues: Uroporphyrinogen decarboxylase (355 aa).

Substrate contacts are provided by residues R38–R42, D87, Y162, S217, and H331.

It belongs to the uroporphyrinogen decarboxylase family. As to quaternary structure, homodimer.

It localises to the cytoplasm. It carries out the reaction uroporphyrinogen III + 4 H(+) = coproporphyrinogen III + 4 CO2. It functions in the pathway porphyrin-containing compound metabolism; protoporphyrin-IX biosynthesis; coproporphyrinogen-III from 5-aminolevulinate: step 4/4. In terms of biological role, catalyzes the decarboxylation of four acetate groups of uroporphyrinogen-III to yield coproporphyrinogen-III. This Streptomyces coelicolor (strain ATCC BAA-471 / A3(2) / M145) protein is Uroporphyrinogen decarboxylase.